The sequence spans 114 residues: Protein E7 (114 aa).

The segment at 1 to 43 is E7 terminal domain; it reads MRGNSVDLQEIVLVQQGEVPENAAVHSGEHSDDEGESEEEERE. A disordered region spans residues 17 to 49; the sequence is GEVPENAAVHSGEHSDDEGESEEEEREQVQQVP. Residues 31–42 are compositionally biased toward acidic residues; the sequence is SDDEGESEEEER. Residues 62–99 fold into a zinc finger; it reads CPFCQAIIRFVCVASNTGIRNLQALLVNSHLDLACHAC. A Nuclear export signal motif is present at residues 80 to 88; sequence IRNLQALLV.

The protein belongs to the papillomaviridae E7 protein family. In terms of assembly, homodimer. Homooligomer. Interacts with host RB1; this interaction induces dissociation of RB1-E2F1 complex thereby disrupting RB1 activity. Interacts with host EP300; this interaction represses EP300 transcriptional activity. Interacts with protein E2; this interaction inhibits E7 oncogenic activity. Interacts with host TMEM173/STING; this interaction impairs the ability of TMEM173/STING to sense cytosolic DNA and promote the production of type I interferon (IFN-alpha and IFN-beta). In terms of processing, highly phosphorylated.

It is found in the host cytoplasm. Its subcellular location is the host nucleus. Its function is as follows. Plays a role in viral genome replication by driving entry of quiescent cells into the cell cycle. Stimulation of progression from G1 to S phase allows the virus to efficiently use the cellular DNA replicating machinery to achieve viral genome replication. E7 protein has both transforming and trans-activating activities. Induces the disassembly of the E2F1 transcription factor from RB1, with subsequent transcriptional activation of E2F1-regulated S-phase genes. Interferes with host histone deacetylation mediated by HDAC1 and HDAC2, leading to transcription activation. Also plays a role in the inhibition of both antiviral and antiproliferative functions of host interferon alpha. Interaction with host TMEM173/STING impairs the ability of TMEM173/STING to sense cytosolic DNA and promote the production of type I interferon (IFN-alpha and IFN-beta). This is Protein E7 from Human papillomavirus type 41.